We begin with the raw amino-acid sequence, 243 residues long: Proteasome subunit beta (243 aa).

Basic and acidic residues-rich tracts occupy residues 1-11 and 33-47; these read MRTPTHDEFSG and NADRRADELGDKETK. A propeptide spans 1–49 (removed in mature form; by autocatalysis); that stretch reads MRTPTHDEFSGRLDSLNGDRSNVFGPELGEFSNADRRADELGDKETKTG. The tract at residues 1–50 is disordered; the sequence is MRTPTHDEFSGRLDSLNGDRSNVFGPELGEFSNADRRADELGDKETKTGT. Residue T50 is the Nucleophile of the active site. Residue S129 is modified to Phosphoserine.

It belongs to the peptidase T1B family. In terms of assembly, the 20S proteasome core is composed of 14 alpha and 14 beta subunits that assemble into four stacked heptameric rings, resulting in a barrel-shaped structure. The two inner rings, each composed of seven catalytic beta subunits, are sandwiched by two outer rings, each composed of seven alpha subunits. H.volcanii produces at least 2 types of 20S proteasomes: an alpha1-beta proteasome and a proteasome containing all three subunits (alpha1, alpha2, and beta) that appears to be asymmetrical with homo-oligomeric alpha1 and alpha2 rings positioned on separate ends. The catalytic chamber with the active sites is on the inside of the barrel. Has probably a gated structure, the ends of the cylinder being occluded by the N-termini of the alpha-subunits. Is likely capped at one or both ends by the proteasome regulatory ATPase, PAN.

It localises to the cytoplasm. The enzyme catalyses Cleavage of peptide bonds with very broad specificity.. The formation of the proteasomal ATPase PAN-20S proteasome complex, via the docking of the C-termini of PAN into the intersubunit pockets in the alpha-rings, triggers opening of the gate for substrate entry. Interconversion between the open-gate and close-gate conformations leads to a dynamic regulation of the 20S proteasome proteolysis activity. In vitro, the chymotrypsin-like activity of the alpha1-beta proteasome is potently inhibited by carbobenzoxyl-leucinyl-leucinyl-leucinal-H (MG132) and significantly by N-acetyl-leucinyl-leucinyl-norleucinal-H (calpain inhibitor I). Its function is as follows. Component of the proteasome core, a large protease complex with broad specificity involved in protein degradation. The H.volcanii alpha1-beta proteasome is able to cleave oligopeptides after Phe, Tyr and Trp, poorly after Glu but not after Arg. Thus, displays chymotrypsin-like activity, low caspase-like activity but no trypsin-like activity. The sequence is that of Proteasome subunit beta from Haloferax volcanii (strain ATCC 29605 / DSM 3757 / JCM 8879 / NBRC 14742 / NCIMB 2012 / VKM B-1768 / DS2) (Halobacterium volcanii).